The sequence spans 607 residues: Cyclic-di-GMP receptor FimW (607 aa).

Residues 323 to 492 (ERTFQRTQGQ…GGTQMGIEMI (170 aa)) form a pilZ-like domain region. The short motif at 324 to 328 (RTFQR) is the RXXXR motif element. The D/NXSXXG motif motif lies at 435–440 (NHSPGG). The segment covering 568 to 582 (SQFEYRSAEPVNTPS) has biased composition (polar residues). The tract at residues 568 to 607 (SQFEYRSAEPVNTPSDKPVTAPVARPPAGEEDFDSLWKSL) is disordered.

As to quaternary structure, monomer in the absence of c-di-GMP. Forms dimers in the presence of c-di-GMP.

It localises to the cytoplasm. Its function is as follows. High-affinity cyclic-di-GMP binding protein that regulates type IV pili (T4P) elongation. Required for T4P-mediated surface attachment and walking motility during the early phases of surface colonization. Not required for twitching motility. Does not bind related nucleotides such as GMP, GDP, GTP or ATP. The protein is Cyclic-di-GMP receptor FimW of Pseudomonas aeruginosa (strain ATCC 15692 / DSM 22644 / CIP 104116 / JCM 14847 / LMG 12228 / 1C / PRS 101 / PAO1).